We begin with the raw amino-acid sequence, 176 residues long: Crossover junction endodeoxyribonuclease RuvC (176 aa).

Residues Asp9, Glu69, and Asp141 contribute to the active site. 3 residues coordinate Mg(2+): Asp9, Glu69, and Asp141.

The protein belongs to the RuvC family. Homodimer which binds Holliday junction (HJ) DNA. The HJ becomes 2-fold symmetrical on binding to RuvC with unstacked arms; it has a different conformation from HJ DNA in complex with RuvA. In the full resolvosome a probable DNA-RuvA(4)-RuvB(12)-RuvC(2) complex forms which resolves the HJ. The cofactor is Mg(2+).

It localises to the cytoplasm. The enzyme catalyses Endonucleolytic cleavage at a junction such as a reciprocal single-stranded crossover between two homologous DNA duplexes (Holliday junction).. In terms of biological role, the RuvA-RuvB-RuvC complex processes Holliday junction (HJ) DNA during genetic recombination and DNA repair. Endonuclease that resolves HJ intermediates. Cleaves cruciform DNA by making single-stranded nicks across the HJ at symmetrical positions within the homologous arms, yielding a 5'-phosphate and a 3'-hydroxyl group; requires a central core of homology in the junction. The consensus cleavage sequence is 5'-(A/T)TT(C/G)-3'. Cleavage occurs on the 3'-side of the TT dinucleotide at the point of strand exchange. HJ branch migration catalyzed by RuvA-RuvB allows RuvC to scan DNA until it finds its consensus sequence, where it cleaves and resolves the cruciform DNA. The sequence is that of Crossover junction endodeoxyribonuclease RuvC from Chromobacterium violaceum (strain ATCC 12472 / DSM 30191 / JCM 1249 / CCUG 213 / NBRC 12614 / NCIMB 9131 / NCTC 9757 / MK).